We begin with the raw amino-acid sequence, 440 residues long: Xylose isomerase (440 aa).

Catalysis depends on residues H100 and D103. E231, E267, H270, D295, D306, D308, and D338 together coordinate Mg(2+).

Belongs to the xylose isomerase family. Homotetramer. The cofactor is Mg(2+).

The protein resides in the cytoplasm. It catalyses the reaction alpha-D-xylose = alpha-D-xylulofuranose. The polypeptide is Xylose isomerase (Burkholderia cenocepacia (strain HI2424)).